We begin with the raw amino-acid sequence, 305 residues long: tRNA pseudouridine synthase B (305 aa).

Residue Asp39 is the Nucleophile of the active site.

It belongs to the pseudouridine synthase TruB family. Type 1 subfamily.

The enzyme catalyses uridine(55) in tRNA = pseudouridine(55) in tRNA. Its function is as follows. Responsible for synthesis of pseudouridine from uracil-55 in the psi GC loop of transfer RNAs. The polypeptide is tRNA pseudouridine synthase B (Staphylococcus aureus (strain MW2)).